The following is a 357-amino-acid chain: UDP-N-acetylglucosamine--N-acetylmuramyl-(pentapeptide) pyrophosphoryl-undecaprenol N-acetylglucosamine transferase (357 aa).

UDP-N-acetyl-alpha-D-glucosamine is bound by residues 10-12, asparagine 124, serine 189, isoleucine 244, and glutamine 289; that span reads TGG.

The protein belongs to the glycosyltransferase 28 family. MurG subfamily.

It localises to the cell membrane. It carries out the reaction Mur2Ac(oyl-L-Ala-gamma-D-Glu-L-Lys-D-Ala-D-Ala)-di-trans,octa-cis-undecaprenyl diphosphate + UDP-N-acetyl-alpha-D-glucosamine = beta-D-GlcNAc-(1-&gt;4)-Mur2Ac(oyl-L-Ala-gamma-D-Glu-L-Lys-D-Ala-D-Ala)-di-trans,octa-cis-undecaprenyl diphosphate + UDP + H(+). The protein operates within cell wall biogenesis; peptidoglycan biosynthesis. Functionally, cell wall formation. Catalyzes the transfer of a GlcNAc subunit on undecaprenyl-pyrophosphoryl-MurNAc-pentapeptide (lipid intermediate I) to form undecaprenyl-pyrophosphoryl-MurNAc-(pentapeptide)GlcNAc (lipid intermediate II). This is UDP-N-acetylglucosamine--N-acetylmuramyl-(pentapeptide) pyrophosphoryl-undecaprenol N-acetylglucosamine transferase from Lactococcus lactis subsp. cremoris (strain MG1363).